A 224-amino-acid polypeptide reads, in one-letter code: Ethylene-inducing xylanase 5 (224 aa).

A signal peptide spans 1–16; the sequence is MLKSLVVLLLTSRVIA. A GH11 domain is found at 32-218; that stretch reads QATPNSQGTH…SSGFAEMTVA (187 aa). Asn-88 carries N-linked (GlcNAc...) asparagine glycosylation. The active-site Nucleophile is the Glu-117. Glu-205 (proton donor) is an active-site residue.

This sequence belongs to the glycosyl hydrolase 11 (cellulase G) family.

It carries out the reaction Endohydrolysis of (1-&gt;4)-beta-D-xylosidic linkages in xylans.. It participates in glycan degradation; xylan degradation. Its function is as follows. Endo-1,4-beta-xylanase involved in the hydrolysis of xylan, a major structural heterogeneous polysaccharide found in plant biomass representing the second most abundant polysaccharide in the biosphere, after cellulose. May act as an elicitor of plant defense responses in certain plants but does not exhibit any cell death when transiently expressed in N.benthamiana. In Verticillium dahliae (strain VdLs.17 / ATCC MYA-4575 / FGSC 10137) (Verticillium wilt), this protein is Ethylene-inducing xylanase 5.